We begin with the raw amino-acid sequence, 2061 residues long: Myoferlin (2061 aa).

In terms of domain architecture, C2 1 spans 1 to 101 (MLRVIVESAS…TGDQSRSLPY (101 aa)). At 1–2025 (MLRVIVESAS…MKFIVWRRFK (2025 aa)) the chain is on the cytoplasmic side. Residues 123-172 (GYDPPSAPHPNDLSGPSVPGMGGDGEEDEGDEDRLDNAVRGPGPKGPVGT) are disordered. Positions 146–156 (DGEEDEGDEDR) are enriched in acidic residues. Ser174 carries the post-translational modification Phosphoserine. 2 consecutive C2 domains span residues 181–300 (RLTK…RKWL) and 339–474 (DSDD…VEDF). The interval 186–281 (KNSRRMLSNK…RADCLMGEFK (96 aa)) is necessary for interaction with EHD2. Residues 323–342 (LGTGDEPPPERRDRDNDSDD) form a disordered region. Ca(2+) contacts are provided by Asp390, Asp396, Asp444, Asp446, and Asp452. Lys553 carries the post-translational modification N6-acetyllysine. The residue at position 729 (Ser729) is a Phosphoserine. At Lys884 the chain carries N6-acetyllysine. Residues 938-967 (ESRYPGGDWKPAEDTYTDANGDKAASPSEL) are disordered. C2 domains follow at residues 1123 to 1251 (GANT…LLWH) and 1282 to 1410 (LPPQ…GKED). Ca(2+)-binding residues include Asp1155, Asp1161, Asp1217, and Asp1219. Residue Lys1507 is modified to N6-acetyllysine. 2 C2 domains span residues 1536–1654 (PAPP…SHCG) and 1772–1920 (GPPG…EKCR). The Ca(2+) site is built by Asp1569, Asp1575, Asp1624, Asp1626, Asp1891, Ser1894, and Asp1897. Ser1915 is modified (phosphoserine). Residues 2026 to 2046 (WVIIGLLFLLILLLFVAVLLY) form a helical membrane-spanning segment. Residues 2047 to 2061 (SLPNYLSMKIVKPNV) lie on the Extracellular side of the membrane.

It belongs to the ferlin family. As to quaternary structure, interacts with DNM2 and KDR. Interacts with EHD1. Interacts with EHD2; the interaction is direct. Interacts with RIPOR2. Ca(2+) is required as a cofactor. As to expression, expressed in myoblast and endothelial cells (at protein level). Highly expressed in cardiac and skeletal muscles. Also present in lung, and at very low levels in kidney, placenta and brain.

The protein localises to the cell membrane. The protein resides in the nucleus membrane. Its subcellular location is the cytoplasmic vesicle membrane. Calcium/phospholipid-binding protein that plays a role in the plasmalemma repair mechanism of endothelial cells that permits rapid resealing of membranes disrupted by mechanical stress. Involved in endocytic recycling. Implicated in VEGF signal transduction by regulating the levels of the receptor KDR. The chain is Myoferlin (MYOF) from Homo sapiens (Human).